The primary structure comprises 29 residues: Potassium channel toxin alpha-KTx 8.3 (29 aa).

Cystine bridges form between cysteine 3–cysteine 19, cysteine 6–cysteine 24, and cysteine 10–cysteine 26.

The protein belongs to the short scorpion toxin superfamily. Potassium channel inhibitor family. Alpha-KTx 08 subfamily. As to expression, expressed by the venom gland.

It is found in the secreted. Functionally, specific and potent inhibitor of ClC-2/CLCN2 chloride channel. It slows ClC-2/CLCN2 activation by increasing the latency to first opening by nearly 8-fold but is unable to inhibit open channels, suggesting that this toxin inhibits channel activation gating. This is Potassium channel toxin alpha-KTx 8.3 from Leiurus hebraeus (Hebrew deathstalker scorpion).